The sequence spans 607 residues: Guanine nucleotide-binding protein-like 1 (607 aa).

Positions 1-14 are enriched in basic residues; it reads MPRKKPFSVKQKKK. Residues 1–81 form a disordered region; the sequence is MPRKKPFSVK…GPRGYDPNRY (81 aa). Over residues 15–26 the composition is skewed to basic and acidic residues; that stretch reads QLQDKRERKRGL. Residues Ser-32, Ser-33, and Ser-34 each carry the phosphoserine modification. 2 positions are modified to phosphothreonine: Thr-48 and Thr-50. 2 positions are modified to phosphoserine: Ser-51 and Ser-68. The 241-residue stretch at 178-418 folds into the CP-type G domain; sequence WRQLWRVLEM…LCDCPGLIFP (241 aa). 225–228 contributes to the GTP binding site; it reads NKVD. Ser-324 bears the Phosphoserine mark. Residues 367–374 and 411–415 contribute to the GTP site; these read GFPNVGKS and DCPGL. The interval 547 to 607 is disordered; the sequence is GPAGDEEEEE…PYALLGEDEC (61 aa). The segment covering 550 to 584 has biased composition (acidic residues); the sequence is GDEEEEEEEELSSSCEEEGEEDRDADEEGEGDEDT. Phosphoserine is present on residues Ser-561, Ser-562, and Ser-563.

The protein belongs to the TRAFAC class YlqF/YawG GTPase family.

In terms of biological role, possible regulatory or functional link with the histocompatibility cluster. The polypeptide is Guanine nucleotide-binding protein-like 1 (GNL1) (Macaca fascicularis (Crab-eating macaque)).